Consider the following 95-residue polypeptide: Histone-like DNA-binding protein (95 aa).

It belongs to the bacterial histone-like protein family.

The protein is Histone-like DNA-binding protein of Rickettsia montanensis.